Consider the following 519-residue polypeptide: MELVLLILVASLIGIAFLALQQHYSYWRRMGVREIRPKWIVGNLMGLLNMRMSPAEFISQLYNHPDAENEPFVGIHVFHKPALLLRDPEMVRNILVKDFAGFSNRYSSSDPKGDPLGSQNIFFLKNPAWKEVRLKLSPFFTGNRLKQMFPLIEEVGASLDAHLRQQPLHNERMRCFDLEAKELCALYTTDVIATVAYGVSANSFTDPKCEFRRHGRSVFEFNLLRAAEFTLVFFLPHLVPFVRFKVVPAEATRFLRKTINYVMSEREKSGQKRNDLIDILIEFRRSTQLAKASGIKDQFVFEGDILVAQAVLFFTAGFESSSSTMAFAMYELAKDTDVQQRLREEIKDALVESGGQVTLKMIESLEFMQMILLEVLRMYPPLPFLDRECTSGRDYSLAPFHKKFVVPKGMPVYIPCYALHMDPQYFPQPRKFLPERFSPENRKLHTPYTYMPFGLGPHGCIGERFGYLQAKVGLVNLLRNHMITTSERTPHRMQLDPKAIITQAKGGIHLRLVRDALGV.

Position 460 (Cys-460) interacts with heme.

Belongs to the cytochrome P450 family. Heme is required as a cofactor.

It localises to the endoplasmic reticulum membrane. It is found in the microsome membrane. In terms of biological role, may be involved in the metabolism of insect hormones and in the breakdown of synthetic insecticides. This is Probable cytochrome P450 6g2 (Cyp6g2) from Drosophila melanogaster (Fruit fly).